Consider the following 420-residue polypeptide: Cyclin-B2-1 (420 aa).

Residues 1-61 (MDRASENRRL…EKSGKEEQKP (61 aa)) form a disordered region. Positions 49 to 60 (PMLEKSGKEEQK) are enriched in basic and acidic residues.

The protein belongs to the cyclin family. Cyclin AB subfamily. As to quaternary structure, interacts with CDKB2-1. Expressed in the root apices.

In terms of biological role, involved in the control of the cell cycle at the G2/M (mitosis) transition. May activate CDKB2-1 kinase. This is Cyclin-B2-1 (CYCB2-1) from Oryza sativa subsp. japonica (Rice).